Consider the following 356-residue polypeptide: MKLDYVLLLLFHLCFVNTELISVITGKIKDSGTTIAISAGAFWGLKDRLKCYLYECCHEPDVNFNYHTLDADIANLLFGQHLVKDVVVNSIKSHWYNENPRKPLVLSFHGYTGSGKNYVAEIIANNTFRLGLRSTFVQHIVATNDFPDKNKLEEYQVELRNRILTTVQKCQRSIFIFDEADKLPEQLLGAIKPFLDYYSTISGVDFRRSIFILLSNKGGGEIARITKEQYESGYPREQLRLEAFERELMNFSYNEKGGLQMSELISNHLIDHFVPFLPLQREHVRSCVGAYLRKRGRGDLVSNVDFVERVLNSLQYFPESSKAFSSSGCKRVDAKTDLEMAKIRPLLSSVHFDDEL.

An N-terminal signal peptide occupies residues 1 to 18; it reads MKLDYVLLLLFHLCFVNT. 110–117 serves as a coordination point for ATP; that stretch reads GYTGSGKN. N-linked (GlcNAc...) asparagine glycosylation is found at N125 and N250.

It belongs to the ClpA/ClpB family. Torsin subfamily.

The protein resides in the endoplasmic reticulum lumen. In terms of biological role, may serve as a molecular chaperone assisting in the proper folding of secreted and/or membrane proteins. This Caenorhabditis elegans protein is Torsin-like protein (ooc-5).